Reading from the N-terminus, the 81-residue chain is MAEEVAELERIFKRFDANGDGKISSSELGETLKTLGSVTPEEIQRMMAEIDTDGDGFISFEEFKDFARANSGLIKDVAKIF.

2 EF-hand domains span residues 3-38 and 41-73; these read EEVA…LGSV and EEIQ…NSGL. The Ca(2+) site is built by D16, N18, D20, K22, E27, D51, D53, D55, and E62.

This Syringa vulgaris (Common lilac) protein is Polcalcin Syr v 3 (SYRV3).